The sequence spans 159 residues: Phosphopantetheine adenylyltransferase (159 aa).

Threonine 10 is a binding site for substrate. Residues 10-11 (TF) and histidine 18 each bind ATP. Substrate contacts are provided by lysine 42, methionine 74, and arginine 88. ATP is bound by residues 89–91 (GLR), glutamate 99, and 124–130 (WSFISSS).

This sequence belongs to the bacterial CoaD family. Homohexamer. It depends on Mg(2+) as a cofactor.

The protein resides in the cytoplasm. It carries out the reaction (R)-4'-phosphopantetheine + ATP + H(+) = 3'-dephospho-CoA + diphosphate. The protein operates within cofactor biosynthesis; coenzyme A biosynthesis; CoA from (R)-pantothenate: step 4/5. Reversibly transfers an adenylyl group from ATP to 4'-phosphopantetheine, yielding dephospho-CoA (dPCoA) and pyrophosphate. The protein is Phosphopantetheine adenylyltransferase of Shigella sonnei (strain Ss046).